Reading from the N-terminus, the 836-residue chain is Probable serine/threonine-protein kinase dyrk1 (836 aa).

Positions 99–278 are enriched in low complexity; the sequence is QQQYQQQHNN…SSNNNNNNKQ (180 aa). Residues 99 to 286 are disordered; it reads QQQYQQQHNN…KQSKYNDGYD (188 aa). Residues 304–624 enclose the Protein kinase domain; that stretch reads FEIISSLGKG…PLEALQHSFF (321 aa). ATP is bound by residues 310 to 318 and K333; that span reads LGKGSFGQV. D432 functions as the Proton acceptor in the catalytic mechanism. 3 disordered regions span residues 627–697, 718–767, and 785–836; these read DETS…QQQQ, TYSP…INSN, and NIYN…NNNI. Residues 630–697 are compositionally biased toward low complexity; the sequence is SQPPQQQSQQ…QQLQQQQQQQ (68 aa). Polar residues predominate over residues 718–728; the sequence is TYSPTTQQSNH. Positions 729–744 are enriched in basic and acidic residues; sequence KLVDQMKKASMKDKSP. The segment covering 785 to 816 has biased composition (low complexity); the sequence is NIYNNNNNNNNNNNNNNNNNNSNNYNNSNELS.

This sequence belongs to the protein kinase superfamily. CMGC Ser/Thr protein kinase family. MNB/DYRK subfamily.

The catalysed reaction is L-seryl-[protein] + ATP = O-phospho-L-seryl-[protein] + ADP + H(+). It carries out the reaction L-threonyl-[protein] + ATP = O-phospho-L-threonyl-[protein] + ADP + H(+). It catalyses the reaction L-tyrosyl-[protein] + ATP = O-phospho-L-tyrosyl-[protein] + ADP + H(+). The protein is Probable serine/threonine-protein kinase dyrk1 (dyrk1) of Dictyostelium discoideum (Social amoeba).